The chain runs to 577 residues: Proline--tRNA ligase (577 aa).

It belongs to the class-II aminoacyl-tRNA synthetase family. ProS type 1 subfamily. Homodimer.

The protein resides in the cytoplasm. It carries out the reaction tRNA(Pro) + L-proline + ATP = L-prolyl-tRNA(Pro) + AMP + diphosphate. In terms of biological role, catalyzes the attachment of proline to tRNA(Pro) in a two-step reaction: proline is first activated by ATP to form Pro-AMP and then transferred to the acceptor end of tRNA(Pro). As ProRS can inadvertently accommodate and process non-cognate amino acids such as alanine and cysteine, to avoid such errors it has two additional distinct editing activities against alanine. One activity is designated as 'pretransfer' editing and involves the tRNA(Pro)-independent hydrolysis of activated Ala-AMP. The other activity is designated 'posttransfer' editing and involves deacylation of mischarged Ala-tRNA(Pro). The misacylated Cys-tRNA(Pro) is not edited by ProRS. The polypeptide is Proline--tRNA ligase (Thermotoga neapolitana (strain ATCC 49049 / DSM 4359 / NBRC 107923 / NS-E)).